Reading from the N-terminus, the 438-residue chain is Gamma-glutamyl phosphate reductase (438 aa).

This sequence belongs to the gamma-glutamyl phosphate reductase family.

It localises to the cytoplasm. The catalysed reaction is L-glutamate 5-semialdehyde + phosphate + NADP(+) = L-glutamyl 5-phosphate + NADPH + H(+). Its pathway is amino-acid biosynthesis; L-proline biosynthesis; L-glutamate 5-semialdehyde from L-glutamate: step 2/2. Catalyzes the NADPH-dependent reduction of L-glutamate 5-phosphate into L-glutamate 5-semialdehyde and phosphate. The product spontaneously undergoes cyclization to form 1-pyrroline-5-carboxylate. This chain is Gamma-glutamyl phosphate reductase, found in Natronomonas pharaonis (strain ATCC 35678 / DSM 2160 / CIP 103997 / JCM 8858 / NBRC 14720 / NCIMB 2260 / Gabara) (Halobacterium pharaonis).